We begin with the raw amino-acid sequence, 25 residues long: Antimicrobial peptide 2 (25 aa).

Expressed by the skin glands.

The protein localises to the secreted. Has very strong antibacterial activity against Gram-positive bacterium S.aureus and very weak activity against Gram-negative bacterium E.coli. This is Antimicrobial peptide 2 from Xenopus tropicalis (Western clawed frog).